The following is a 339-amino-acid chain: NADH-quinone oxidoreductase subunit H (339 aa).

9 helical membrane-spanning segments follow: residues 10–30 (FPLTVIALKVVAITIPLILCV), 50–70 (PNVVGPFGLLQPIADAVKLLF), 82–102 (ILFILAPIITFVLSLIGWAVI), 115–135 (VGVLYILAISSLSVYGIIIAG), 161–181 (MGLVIITVLLTTGTLNLSGII), 187–207 (LPWWIDLMLLPMSIVFFISVL), 235–255 (MGFALFFLGEYANMILVSAMT), 275–295 (IPGFFWFVFKVGFLLFCFLWI), and 311–331 (GWKVFLPFTLFGVVLVSSVLF).

It belongs to the complex I subunit 1 family. In terms of assembly, NDH-1 is composed of 14 different subunits. Subunits NuoA, H, J, K, L, M, N constitute the membrane sector of the complex.

It localises to the cell inner membrane. It carries out the reaction a quinone + NADH + 5 H(+)(in) = a quinol + NAD(+) + 4 H(+)(out). Its function is as follows. NDH-1 shuttles electrons from NADH, via FMN and iron-sulfur (Fe-S) centers, to quinones in the respiratory chain. The immediate electron acceptor for the enzyme in this species is believed to be ubiquinone. Couples the redox reaction to proton translocation (for every two electrons transferred, four hydrogen ions are translocated across the cytoplasmic membrane), and thus conserves the redox energy in a proton gradient. This subunit may bind ubiquinone. The polypeptide is NADH-quinone oxidoreductase subunit H (Rickettsia prowazekii (strain Madrid E)).